The sequence spans 325 residues: GMP reductase (325 aa).

Cysteine 174 (thioimidate intermediate) is an active-site residue. An NADP(+)-binding site is contributed by 203 to 226 (IIADGGIRTHGDIAKSIRFGATMV).

This sequence belongs to the IMPDH/GMPR family. GuaC type 2 subfamily.

The catalysed reaction is IMP + NH4(+) + NADP(+) = GMP + NADPH + 2 H(+). In terms of biological role, catalyzes the irreversible NADPH-dependent deamination of GMP to IMP. It functions in the conversion of nucleobase, nucleoside and nucleotide derivatives of G to A nucleotides, and in maintaining the intracellular balance of A and G nucleotides. The polypeptide is GMP reductase (Helicobacter pylori (strain J99 / ATCC 700824) (Campylobacter pylori J99)).